The chain runs to 515 residues: Glucose-6-phosphate 1-dehydrogenase X (515 aa).

Ala2 is modified (N-acetylalanine). NADP(+)-binding positions include Gly38–Lys45, Arg72, Tyr147, and Lys171. Residues Lys171, His201–Lys205, Glu239, and Asp258 contribute to the D-glucose 6-phosphate site. His263 serves as the catalytic Proton acceptor. Arg357 is an NADP(+) binding site. D-glucose 6-phosphate contacts are provided by Lys360 and Arg365. NADP(+)-binding residues include Lys366, Arg370, and Arg393. Residue Gln395 participates in D-glucose 6-phosphate binding. NADP(+) contacts are provided by residues Tyr401 to Lys403, Asp421 to Thr423, Arg487, and Tyr503. At Tyr507 the chain carries Phosphotyrosine. Residue Trp509 coordinates NADP(+).

Belongs to the glucose-6-phosphate dehydrogenase family. In terms of assembly, homotetramer; dimer of dimers. Interacts with SIRT2; the interaction is enhanced by H(2)O(2) treatment. Forms a ternary complex with ALDOB and TP53; this interaction is direct. ALDOB stabilizes the complex inhibiting G6PD activity and keeping oxidative pentose phosphate metabolism in check. Post-translationally, acetylated by ELP3 at Lys-403; acetylation inhibits its homodimerization and enzyme activity. Deacetylated by SIRT2 at Lys-403; deacetylation stimulates its enzyme activity.

Its subcellular location is the cytoplasm. The protein resides in the cytosol. It is found in the membrane. The enzyme catalyses D-glucose 6-phosphate + NADP(+) = 6-phospho-D-glucono-1,5-lactone + NADPH + H(+). Its pathway is carbohydrate degradation; pentose phosphate pathway; D-ribulose 5-phosphate from D-glucose 6-phosphate (oxidative stage): step 1/3. In terms of biological role, catalyzes the rate-limiting step of the oxidative pentose-phosphate pathway, which represents a route for the dissimilation of carbohydrates besides glycolysis. The main function of this enzyme is to provide reducing power (NADPH) and pentose phosphates for fatty acid and nucleic acid synthesis. In Mus musculus (Mouse), this protein is Glucose-6-phosphate 1-dehydrogenase X (G6pdx).